Consider the following 157-residue polypeptide: Transcription antitermination protein NusB (157 aa).

It belongs to the NusB family.

Involved in transcription antitermination. Required for transcription of ribosomal RNA (rRNA) genes. Binds specifically to the boxA antiterminator sequence of the ribosomal RNA (rrn) operons. The chain is Transcription antitermination protein NusB from Helicobacter hepaticus (strain ATCC 51449 / 3B1).